The sequence spans 79 residues: Cytochrome b (79 aa).

Helical transmembrane passes span 1 to 7, 31 to 52, and 67 to 79; these read TAMFLAM, WLIR…YLHI, and WNVG…LTMM. Positions 37 and 51 each coordinate heme b.

The protein belongs to the cytochrome b family. In terms of assembly, the cytochrome bc1 complex contains 3 respiratory subunits (MT-CYB, CYC1 and UQCRFS1), 2 core proteins (UQCRC1 and UQCRC2) and probably 6 low-molecular weight proteins. Heme b serves as cofactor.

The protein localises to the mitochondrion inner membrane. Component of the ubiquinol-cytochrome c reductase complex (complex III or cytochrome b-c1 complex) that is part of the mitochondrial respiratory chain. The b-c1 complex mediates electron transfer from ubiquinol to cytochrome c. Contributes to the generation of a proton gradient across the mitochondrial membrane that is then used for ATP synthesis. The chain is Cytochrome b (mt-cyb) from Hypsophrys nicaraguensis (Moga).